The following is a 400-amino-acid chain: Jasmonate-induced oxygenase 1 (400 aa).

One can recognise a Fe2OG dioxygenase domain in the interval 248–349 (DVGACLRVNY…RVSLAFFYNP (102 aa)). Arg254 contributes to the jasmonate binding site. 2 residues coordinate 2-oxoglutarate: Asn256 and Tyr258. Fe cation is bound by residues His273, Asp275, and His330. 2-oxoglutarate-binding residues include Arg340 and Ser342. 2 residues coordinate jasmonate: Arg379 and Arg383.

This sequence belongs to the iron/ascorbate-dependent oxidoreductase family. It depends on L-ascorbate as a cofactor. Requires Fe(2+) as cofactor.

The enzyme catalyses jasmonate + 2-oxoglutarate + O2 = (1R,2R)-12-hydroxyjasmonate + succinate + CO2. Functionally, 2-oxoglutarate-dependent dioxygenase involved in the oxidation of jasmonate (JA), a stress-induced phytohormone synthesized in response to attack by pathogens and herbivores, which triggers the activation of defense responses via the JA-mediated signaling pathway. Converts JA to 12-hydroxyjasmonate (12OH-JA), an inactive form of JA. Prevents over-accumulation of JA and indirectly its bioactive form JA-Ile under stress response. Acts as a negative regulator of JA-mediated defense signaling, by contributing to 12OH-JA accumulation, which represses JA defense responses upon infection by the fungal pathogen Botrytis cinerea and the herbivorous caterpillar Mamestra brassicae. In Arabidopsis thaliana (Mouse-ear cress), this protein is Jasmonate-induced oxygenase 1.